Here is a 244-residue protein sequence, read N- to C-terminus: MEEEKLEIVGPLEEPLMGNIVPEEINGLDSLTSSDSDSEKPDSPVPINAPIYRMFGRERPIHMVLGGGKPADVLLWRDKKVTLGLLSAVTVIWLLFGFGGRRLLTSLCRGSILFLLLSFLWSNALNKSPENMMDIYIPEKPLLQAASAMTFELNCAFATLRSIALERDIKNFVMAVIGLWLVSVIGNWFSFLSLLYICFVLIHTVPMLYEKYEDEIDPIAEKAVIEMKKHYQVFEAKFLSKIPH.

One can recognise a Reticulon domain in the interval 70 to 244; that stretch reads PADVLLWRDK…EAKFLSKIPH (175 aa). Transmembrane regions (helical) follow at residues 80–100, 103–123, and 172–192; these read KVTLGLLSAVTVIWLLFGFGG, LLTSLCRGSILFLLLSFLWSN, and FVMAVIGLWLVSVIGNWFSFL.

The protein resides in the endoplasmic reticulum membrane. The chain is Reticulon-like protein B7 (RTNLB7) from Arabidopsis thaliana (Mouse-ear cress).